The following is a 589-amino-acid chain: Proline--tRNA ligase (589 aa).

It belongs to the class-II aminoacyl-tRNA synthetase family. ProS type 1 subfamily. Homodimer.

It localises to the cytoplasm. The catalysed reaction is tRNA(Pro) + L-proline + ATP = L-prolyl-tRNA(Pro) + AMP + diphosphate. Functionally, catalyzes the attachment of proline to tRNA(Pro) in a two-step reaction: proline is first activated by ATP to form Pro-AMP and then transferred to the acceptor end of tRNA(Pro). As ProRS can inadvertently accommodate and process non-cognate amino acids such as alanine and cysteine, to avoid such errors it has two additional distinct editing activities against alanine. One activity is designated as 'pretransfer' editing and involves the tRNA(Pro)-independent hydrolysis of activated Ala-AMP. The other activity is designated 'posttransfer' editing and involves deacylation of mischarged Ala-tRNA(Pro). The misacylated Cys-tRNA(Pro) is not edited by ProRS. This Corynebacterium aurimucosum (strain ATCC 700975 / DSM 44827 / CIP 107346 / CN-1) (Corynebacterium nigricans) protein is Proline--tRNA ligase.